The primary structure comprises 303 residues: Polyisoprenyl-teichoic acid--peptidoglycan teichoic acid transferase TagU (303 aa).

The Cytoplasmic segment spans residues 1–4 (MKKK). The helical; Signal-anchor for type II membrane protein transmembrane segment at 5–25 (ILFWVLGILGVLIIGGGIYAY) threads the bilayer. Over 26 to 303 (NVYSSVSNTL…KLRTHLEVTK (278 aa)) the chain is Extracellular.

The protein belongs to the LytR/CpsA/Psr (LCP) family.

The protein resides in the cell membrane. Its pathway is cell wall biogenesis. Its function is as follows. May catalyze the final step in cell wall teichoic acid biosynthesis, the transfer of the anionic cell wall polymers (APs) from their lipid-linked precursor to the cell wall peptidoglycan (PG). The sequence is that of Polyisoprenyl-teichoic acid--peptidoglycan teichoic acid transferase TagU from Bacillus cereus (strain ZK / E33L).